A 320-amino-acid chain; its full sequence is Dual oxidase maturation factor 2 (320 aa).

The Extracellular segment spans residues 1–21 (MTLWNGVLPFYPQPRHAAGFS). A helical transmembrane segment spans residues 22 to 42 (VPLLIVILVFLALAASFLLIL). Topologically, residues 43 to 56 (PGIRGHSRWFWLVR) are cytoplasmic. Residues 57–77 (VLLSLFIGAEIVAVHFSAEWF) traverse the membrane as a helical segment. Topologically, residues 78–183 (VGTVNTNTSY…HLAGHYASAT (106 aa)) are extracellular. N-linked (GlcNAc...) asparagine glycans are attached at residues Asn84, Asn109, and Asn121. A helical membrane pass occupies residues 184-204 (LWVAFCFWLLSNVLLSTPAPL). The Cytoplasmic portion of the chain corresponds to 205–206 (YG). A helical transmembrane segment spans residues 207–227 (GLALLTTGAFALFGVFALASI). Over 228 to 247 (SSVPLCPLRLGSSALTTQYG) the chain is Extracellular. A helical membrane pass occupies residues 248 to 268 (AAFWVTLATGVLCLFLGGAVV). Residues 269–320 (SLQYVRPSALRTLLDQSAKDCSQERGGSPLILGDPLHKQAALPDLKCITTNL) lie on the Cytoplasmic side of the membrane.

The protein belongs to the DUOXA family. Heterodimer with DUXA2; disulfide-linked. Interacts with CSNK1G2. N-glycosylated. In terms of tissue distribution, specifically expressed in thyroid. Also detected in salivary glands.

The protein resides in the endoplasmic reticulum membrane. Its function is as follows. Required for the maturation and the transport from the endoplasmic reticulum to the plasma membrane of functional DUOX2. May play a role in thyroid hormone synthesis. The chain is Dual oxidase maturation factor 2 (DUOXA2) from Homo sapiens (Human).